The chain runs to 504 residues: Plasma protease C1 inhibitor (504 aa).

The first 22 residues, 1 to 22 (MASKLTPLTLLLLLLAGDRAFS), serve as a signal peptide directing secretion. The disordered stretch occupies residues 23 to 75 (DSEVTSHSSQDPLVVQEGSRDSVPERDGSRSPIEHTGQSSTWPTTSGSTKISN). Residues 24-33 (SEVTSHSSQD) show a composition bias toward polar residues. Positions 40–55 (GSRDSVPERDGSRSPI) are enriched in basic and acidic residues. The span at 58 to 75 (TGQSSTWPTTSGSTKISN) shows a compositional bias: polar residues. Residues N75, N83, N107, N243, and N356 are each glycosylated (N-linked (GlcNAc...) asparagine). Residues 94–132 (AQLPEDSPSQSPVNSSSPPSTASAPPTQAPTEPLCPEPL) are disordered. Residues 100-125 (SPSQSPVNSSSPPSTASAPPTQAPTE) are compositionally biased toward low complexity.

The protein belongs to the serpin family. Interacts with MASP1.

Its subcellular location is the secreted. Its function is as follows. Serine protease inhibitor, which acrs as a regulator of the classical complement pathway. Forms a proteolytically inactive stoichiometric complex with the C1r or C1s proteases. May also regulate blood coagulation, fibrinolysis and the generation of kinins. Very efficient inhibitor of FXIIa. Inhibits chymotrypsin and kallikrein. The sequence is that of Plasma protease C1 inhibitor (Serping1) from Rattus norvegicus (Rat).